We begin with the raw amino-acid sequence, 244 residues long: Large ribosomal subunit protein uL30A (244 aa).

The segment at 1-26 (MAAEKILTPESQLKKSKAQQKTAEQV) is disordered.

Belongs to the universal ribosomal protein uL30 family. As to quaternary structure, component of the large ribosomal subunit (LSU). Mature yeast ribosomes consist of a small (40S) and a large (60S) subunit. The 40S small subunit contains 1 molecule of ribosomal RNA (18S rRNA) and 33 different proteins (encoded by 57 genes). The large 60S subunit contains 3 rRNA molecules (25S, 5.8S and 5S rRNA) and 46 different proteins (encoded by 81 genes).

Its subcellular location is the cytoplasm. Functionally, component of the ribosome, a large ribonucleoprotein complex responsible for the synthesis of proteins in the cell. The small ribosomal subunit (SSU) binds messenger RNAs (mRNAs) and translates the encoded message by selecting cognate aminoacyl-transfer RNA (tRNA) molecules. The large subunit (LSU) contains the ribosomal catalytic site termed the peptidyl transferase center (PTC), which catalyzes the formation of peptide bonds, thereby polymerizing the amino acids delivered by tRNAs into a polypeptide chain. The nascent polypeptides leave the ribosome through a tunnel in the LSU and interact with protein factors that function in enzymatic processing, targeting, and the membrane insertion of nascent chains at the exit of the ribosomal tunnel. The sequence is that of Large ribosomal subunit protein uL30A from Saccharomyces cerevisiae (strain ATCC 204508 / S288c) (Baker's yeast).